We begin with the raw amino-acid sequence, 481 residues long: Proline--tRNA ligase (481 aa).

The protein belongs to the class-II aminoacyl-tRNA synthetase family. ProS type 3 subfamily. In terms of assembly, homodimer.

It is found in the cytoplasm. The catalysed reaction is tRNA(Pro) + L-proline + ATP = L-prolyl-tRNA(Pro) + AMP + diphosphate. Its function is as follows. Catalyzes the attachment of proline to tRNA(Pro) in a two-step reaction: proline is first activated by ATP to form Pro-AMP and then transferred to the acceptor end of tRNA(Pro). The polypeptide is Proline--tRNA ligase (Prosthecochloris aestuarii (strain DSM 271 / SK 413)).